A 110-amino-acid polypeptide reads, in one-letter code: MKFVLLFGVLLVTLFSYSSAEMFDDFDQADEDELLSLIEKEEARKDCIPKHHECTNNKHGCCRGHLFKYKCQCTTVVTQSGEETERCFCGTPPHHKAAELVVGFGKKIFG.

A signal peptide spans 1 to 20 (MKFVLLFGVLLVTLFSYSSA). Residues 21–44 (EMFDDFDQADEDELLSLIEKEEAR) constitute a propeptide that is removed on maturation. Intrachain disulfides connect cysteine 47–cysteine 62, cysteine 54–cysteine 71, cysteine 61–cysteine 89, and cysteine 73–cysteine 87.

The protein belongs to the neurotoxin 19 (CSTX) family. 03 subfamily. As to expression, expressed by the venom gland.

The protein localises to the secreted. The sequence is that of U1-lycotoxin-Ls1kk from Lycosa singoriensis (Wolf spider).